The chain runs to 58 residues: UPF0337 protein SAV_738 (58 aa).

The disordered stretch occupies residues 1–58 (MAADEKAQANGEQAKGKVKKVVGGAAGNESLKGKGHAEESKGDLRAAKEKAKDAIKRK). Positions 31 to 58 (LKGKGHAEESKGDLRAAKEKAKDAIKRK) are enriched in basic and acidic residues.

Belongs to the UPF0337 (CsbD) family.

In Streptomyces avermitilis (strain ATCC 31267 / DSM 46492 / JCM 5070 / NBRC 14893 / NCIMB 12804 / NRRL 8165 / MA-4680), this protein is UPF0337 protein SAV_738.